Reading from the N-terminus, the 499-residue chain is Glycerol kinase (499 aa).

T13 is an ADP binding site. ATP contacts are provided by T13, T14, and S15. T13 is a binding site for sn-glycerol 3-phosphate. R17 serves as a coordination point for ADP. 4 residues coordinate sn-glycerol 3-phosphate: R83, E84, Y135, and D244. Glycerol contacts are provided by R83, E84, Y135, D244, and Q245. 2 residues coordinate ADP: T266 and G309. The ATP site is built by T266, G309, Q313, and G410. ADP is bound by residues G410 and N414.

Belongs to the FGGY kinase family.

The enzyme catalyses glycerol + ATP = sn-glycerol 3-phosphate + ADP + H(+). Its pathway is polyol metabolism; glycerol degradation via glycerol kinase pathway; sn-glycerol 3-phosphate from glycerol: step 1/1. Its activity is regulated as follows. Inhibited by fructose 1,6-bisphosphate (FBP). Functionally, key enzyme in the regulation of glycerol uptake and metabolism. Catalyzes the phosphorylation of glycerol to yield sn-glycerol 3-phosphate. The protein is Glycerol kinase of Paraburkholderia phytofirmans (strain DSM 17436 / LMG 22146 / PsJN) (Burkholderia phytofirmans).